A 144-amino-acid polypeptide reads, in one-letter code: Vasopressin-neurophysin 2-copeptin (144 aa).

Cysteines 1 and 6 form a disulfide. Glycine amide is present on G9. Cystine bridges form between C22/C66, C25/C39, C33/C56, C40/C46, C73/C85, C79/C97, and C86/C91. The N-linked (GlcNAc...) asparagine glycan is linked to N112.

Belongs to the vasopressin/oxytocin family. Interacts with vasopressin receptors V1bR/AVPR1B (Ki=85 pM), V1aR/AVPR1A (Ki=0.6 nM) and V2R/AVPR2 (Ki=4.9 nM). Interacts with oxytocin receptor (OXTR) (Ki=110 nM).

Its subcellular location is the secreted. Neurophysin 2 specifically binds vasopressin. Functionally, vasopressin has a direct antidiuretic action on the kidney, it also causes vasoconstriction of the peripheral vessels. Acts by binding to vasopressin receptors (V1bR/AVPR1B, V1aR/AVPR1A, and V2R/AVPR2). This Cavia porcellus (Guinea pig) protein is Vasopressin-neurophysin 2-copeptin (AVP).